Consider the following 360-residue polypeptide: Decorin (360 aa).

The first 16 residues, 1-16 (MTATLILLLLAQVSWA), serve as a signal peptide directing secretion. Positions 17–30 (GPFQQRGLFDFMLE) are excised as a propeptide. O-linked (Xyl...) (glycosaminoglycan) serine glycosylation is present at S34. Intrachain disulfides connect C55–C61 and C59–C68. LRR repeat units lie at residues 74 to 94 (DKVP…NNKI), 95 to 118 (TEIK…NNKI), 119 to 142 (SKIS…KNHL), 143 to 163 (KELP…ENEI), 164 to 187 (TKVR…TNPL), 188 to 213 (KSSG…DTNI), 214 to 234 (TTIP…GNKI), 235 to 258 (TKID…FNDI), 259 to 282 (SAVD…NNKL), 283 to 305 (IRVP…NNNI), 306 to 335 (SVVG…SNPV), and 336 to 360 (QYWE…GNYK). N-linked (GlcNAc...) asparagine glycosylation occurs at N212. 2 N-linked (GlcNAc...) asparagine glycosylation sites follow: N263 and N304. C314 and C347 form a disulfide bridge.

It belongs to the small leucine-rich proteoglycan (SLRP) family. SLRP class I subfamily. As to quaternary structure, binds to type I and type II collagen, fibronectin and TGF-beta. Forms a ternary complex with MFAP2 and ELN. Interacts with DPT. In terms of processing, the attached glycosaminoglycan chain can be either chondroitin sulfate or dermatan sulfate depending upon the tissue of origin.

It is found in the secreted. The protein resides in the extracellular space. Its subcellular location is the extracellular matrix. May affect the rate of fibrils formation. The chain is Decorin (DCN) from Oryctolagus cuniculus (Rabbit).